Consider the following 130-residue polypeptide: D-ribose pyranase (130 aa).

His-20 acts as the Proton donor in catalysis. Substrate-binding positions include Asp-28, His-97, and 119-121 (YSN).

Belongs to the RbsD / FucU family. RbsD subfamily. Homodecamer.

It is found in the cytoplasm. It catalyses the reaction beta-D-ribopyranose = beta-D-ribofuranose. It participates in carbohydrate metabolism; D-ribose degradation; D-ribose 5-phosphate from beta-D-ribopyranose: step 1/2. Functionally, catalyzes the interconversion of beta-pyran and beta-furan forms of D-ribose. The protein is D-ribose pyranase of Lacticaseibacillus casei (strain BL23) (Lactobacillus casei).